A 201-amino-acid chain; its full sequence is Glycerol-3-phosphate acyltransferase (201 aa).

Transmembrane regions (helical) follow at residues 4-24 (LVAATLGGYLLGSVPFGLVLT), 55-75 (LATLLLDGGKGAIAVGLVWVL), 80-100 (MVPVAGFAAVLGHNFPVWLGF), 110-130 (IGTLLAAAWPVGLACIGTWLV), and 152-174 (FALYFAGPQYALMAAGLAVMGFY).

This sequence belongs to the PlsY family. In terms of assembly, probably interacts with PlsX.

Its subcellular location is the cell inner membrane. The enzyme catalyses an acyl phosphate + sn-glycerol 3-phosphate = a 1-acyl-sn-glycero-3-phosphate + phosphate. The protein operates within lipid metabolism; phospholipid metabolism. Catalyzes the transfer of an acyl group from acyl-phosphate (acyl-PO(4)) to glycerol-3-phosphate (G3P) to form lysophosphatidic acid (LPA). This enzyme utilizes acyl-phosphate as fatty acyl donor, but not acyl-CoA or acyl-ACP. In Paramagnetospirillum magneticum (strain ATCC 700264 / AMB-1) (Magnetospirillum magneticum), this protein is Glycerol-3-phosphate acyltransferase.